A 77-amino-acid polypeptide reads, in one-letter code: Small VCP/p97-interacting protein (77 aa).

The tract at residues 1 to 77 (MGLCFPCPAE…TAGGLRWTVS (77 aa)) is disordered. Residue Gly-2 is the site of N-myristoyl glycine attachment. S-palmitoyl cysteine attachment occurs at residues Cys-4 and Cys-7. Residues 18-37 (PEEKREKLAEAAERRQKEAA) show a composition bias toward basic and acidic residues. The VCP/p97-interacting motif (VIM) stretch occupies residues 21 to 33 (KREKLAEAAERRQ). Ser-46 carries the phosphoserine modification.

It belongs to the SVIP family. In terms of assembly, interacts (via VIM motif) with VCP/p97. Forms a complex with VCP/p97 and DERL1. As to expression, highly expressed in the medulla spinalis, adrenal gland, cerebrum, cerebellum, and sciatic nerve.

The protein localises to the membrane. It localises to the smooth endoplasmic reticulum membrane. The protein resides in the golgi apparatus membrane. Its subcellular location is the cell membrane. It is found in the lysosome membrane. Functionally, negative regulator of the ER-associated degradation pathway (ERAD) of misfolded proteins. It competes with AMFR/gp78 for binding VCP/p97, and inhibits AMFR/gp78-VCP/p97 complex formation that is required for degradation of ERAD substrates. Involved in the regulation of adrenal cortisol and dehydroepiandrosterone (DHEA) biosynthesis. The polypeptide is Small VCP/p97-interacting protein (Svip) (Mus musculus (Mouse)).